Reading from the N-terminus, the 53-residue chain is Rubredoxin (53 aa).

A Rubredoxin-like domain is found at 1-53; it reads MQKYVCDICGYVYDPAVGDPDNGVAPGTAFADLPEDWVCPECGVSKDEFSPEA. Fe cation-binding residues include C6, C9, C39, and C42.

It belongs to the rubredoxin family. It depends on Fe(3+) as a cofactor.

Rubredoxin is a small nonheme, iron protein lacking acid-labile sulfide. Its single Fe, chelated to 4 Cys, functions as an electron acceptor and may also stabilize the conformation of the molecule. The chain is Rubredoxin from Butyribacterium methylotrophicum.